A 391-amino-acid polypeptide reads, in one-letter code: Dual-specificity RNA methyltransferase RlmN (391 aa).

Catalysis depends on glutamate 112, which acts as the Proton acceptor. One can recognise a Radical SAM core domain in the interval 118-368; that stretch reads ESDRGTLCIS…VRTPRGRDIL (251 aa). A disulfide bridge connects residues cysteine 125 and cysteine 371. [4Fe-4S] cluster-binding residues include cysteine 132, cysteine 136, and cysteine 139. S-adenosyl-L-methionine contacts are provided by residues 197–198, serine 229, 251–253, and asparagine 328; these read GE and SLH. The active-site S-methylcysteine intermediate is cysteine 371.

It belongs to the radical SAM superfamily. RlmN family. Requires [4Fe-4S] cluster as cofactor.

The protein resides in the cytoplasm. The enzyme catalyses adenosine(2503) in 23S rRNA + 2 reduced [2Fe-2S]-[ferredoxin] + 2 S-adenosyl-L-methionine = 2-methyladenosine(2503) in 23S rRNA + 5'-deoxyadenosine + L-methionine + 2 oxidized [2Fe-2S]-[ferredoxin] + S-adenosyl-L-homocysteine. It catalyses the reaction adenosine(37) in tRNA + 2 reduced [2Fe-2S]-[ferredoxin] + 2 S-adenosyl-L-methionine = 2-methyladenosine(37) in tRNA + 5'-deoxyadenosine + L-methionine + 2 oxidized [2Fe-2S]-[ferredoxin] + S-adenosyl-L-homocysteine. Functionally, specifically methylates position 2 of adenine 2503 in 23S rRNA and position 2 of adenine 37 in tRNAs. m2A2503 modification seems to play a crucial role in the proofreading step occurring at the peptidyl transferase center and thus would serve to optimize ribosomal fidelity. In Beijerinckia indica subsp. indica (strain ATCC 9039 / DSM 1715 / NCIMB 8712), this protein is Dual-specificity RNA methyltransferase RlmN.